The chain runs to 215 residues: Peptide methionine sulfoxide reductase MsrA (215 aa).

Cys58 is a catalytic residue.

The protein belongs to the MsrA Met sulfoxide reductase family.

It catalyses the reaction L-methionyl-[protein] + [thioredoxin]-disulfide + H2O = L-methionyl-(S)-S-oxide-[protein] + [thioredoxin]-dithiol. It carries out the reaction [thioredoxin]-disulfide + L-methionine + H2O = L-methionine (S)-S-oxide + [thioredoxin]-dithiol. In terms of biological role, has an important function as a repair enzyme for proteins that have been inactivated by oxidation. Catalyzes the reversible oxidation-reduction of methionine sulfoxide in proteins to methionine. This Pseudomonas savastanoi pv. phaseolicola (strain 1448A / Race 6) (Pseudomonas syringae pv. phaseolicola (strain 1448A / Race 6)) protein is Peptide methionine sulfoxide reductase MsrA.